Reading from the N-terminus, the 79-residue chain is Small ribosomal subunit protein bS18c (79 aa).

It belongs to the bacterial ribosomal protein bS18 family. As to quaternary structure, part of the 30S ribosomal subunit.

The protein resides in the plastid. Its subcellular location is the chloroplast. This is Small ribosomal subunit protein bS18c from Chaetosphaeridium globosum (Charophycean green alga).